The following is a 680-amino-acid chain: Multisubstrate pseudouridine synthase 7 (680 aa).

Composition is skewed to basic and acidic residues over residues 1–30 (MSQENHVDVPRKRIRIDQSESSRNLERNGL) and 99–116 (ILSKATGDKETEDAKDSS). Disordered regions lie at residues 1–42 (MSQE…DLSG), 99–136 (ILSKATGDKETEDAKDSSNQDISNDQKAPSFKEQEPAT), and 206–229 (TKGNGTFTVSKTTRKNQPRSRRDP). Residues 206–216 (TKGNGTFTVSK) are compositionally biased toward polar residues. Asp277 acts as the Nucleophile in catalysis. In terms of domain architecture, TRUD spans 358-596 (GFINYFGLQR…PGDYRKLLVR (239 aa)).

The protein belongs to the pseudouridine synthase TruD family.

Its subcellular location is the nucleus. The protein localises to the cytoplasm. The enzyme catalyses uridine in 5S rRNA = pseudouridine in 5S rRNA. It carries out the reaction uridine in snRNA = pseudouridine in snRNA. It catalyses the reaction uridine(13) in tRNA = pseudouridine(13) in tRNA. The catalysed reaction is a uridine in mRNA = a pseudouridine in mRNA. Catalyzes pseudouridylation at position 35 in U2 snRNA stem-loop II region which induces particular conformation of the mRNA-U2 snRNA duplex and places the nucleophile in an accessible position for the first step of splicing. Also catalyzes pseudouridylation at position 56 in U2 snRNA. Also catalyzes pseudouridylation at position 50 in 5S rRNA, position 13 in cytoplasmic tRNAs, and position 35 in pre-tRNA(Tyr). Pseudouridine residues in tRNAs may stabilize the local RNA conformation, favor interactions with protein partners and play an important role in the stabilization of the codon-anticodon interaction with mRNA. Also catalyzes pseudouridylation of mRNAs in response to heat shock: mediates pseudouridylation of mRNAs with the consensus sequence 5'-UGUAR-3'. The protein is Multisubstrate pseudouridine synthase 7 (pus7) of Schizosaccharomyces pombe (strain 972 / ATCC 24843) (Fission yeast).